A 261-amino-acid polypeptide reads, in one-letter code: Prostate-specific antigen (261 aa).

The first 17 residues, 1–17 (MWVPVVFLTLSVTWIGA), serve as a signal peptide directing secretion. Positions 18-24 (APLILSR) are cleaved as a propeptide — activation peptide. The 234-residue stretch at 25–258 (IVGGWECEKH…YRKWIKDTIV (234 aa)) folds into the Peptidase S1 domain. 5 disulfides stabilise this stretch: C31–C173, C50–C66, C152–C219, C184–C198, and C209–C234. The active-site Charge relay system is H65. An N-linked (GlcNAc...) asparagine glycan is attached at N69. D120 serves as the catalytic Charge relay system. Residue S213 is the Charge relay system of the active site.

Belongs to the peptidase S1 family. Kallikrein subfamily. In terms of assembly, forms a heterodimer with SERPINA5.

Its subcellular location is the secreted. It carries out the reaction Preferential cleavage: -Tyr-|-Xaa-.. Its activity is regulated as follows. Inhibited by SERPINA5. Activity is strongly inhibited by Zn2+, 100 times more abundant in semen than in serum. This inhibition is relieved by exposure to semenogelins, which are avid zinc binders. In terms of biological role, hydrolyzes semenogelin-1 thus leading to the liquefaction of the seminal coagulum. The chain is Prostate-specific antigen (KLK3) from Homo sapiens (Human).